A 128-amino-acid chain; its full sequence is S-adenosylmethionine decarboxylase proenzyme (128 aa).

Ser-61 (schiff-base intermediate with substrate; via pyruvic acid) is an active-site residue. Ser-61 is subject to Pyruvic acid (Ser); by autocatalysis. His-66 (proton acceptor; for processing activity) is an active-site residue. Cys-81 functions as the Proton donor; for catalytic activity in the catalytic mechanism.

This sequence belongs to the prokaryotic AdoMetDC family. Type 1 subfamily. Heterotetramer of two alpha and two beta chains arranged as a dimer of alpha/beta heterodimers. Pyruvate serves as cofactor. In terms of processing, is synthesized initially as an inactive proenzyme. Formation of the active enzyme involves a self-maturation process in which the active site pyruvoyl group is generated from an internal serine residue via an autocatalytic post-translational modification. Two non-identical subunits are generated from the proenzyme in this reaction, and the pyruvate is formed at the N-terminus of the alpha chain, which is derived from the carboxyl end of the proenzyme. The post-translation cleavage follows an unusual pathway, termed non-hydrolytic serinolysis, in which the side chain hydroxyl group of the serine supplies its oxygen atom to form the C-terminus of the beta chain, while the remainder of the serine residue undergoes an oxidative deamination to produce ammonia and the pyruvoyl group blocking the N-terminus of the alpha chain.

The catalysed reaction is S-adenosyl-L-methionine + H(+) = S-adenosyl 3-(methylsulfanyl)propylamine + CO2. It functions in the pathway amine and polyamine biosynthesis; S-adenosylmethioninamine biosynthesis; S-adenosylmethioninamine from S-adenosyl-L-methionine: step 1/1. In terms of biological role, catalyzes the decarboxylation of S-adenosylmethionine to S-adenosylmethioninamine (dcAdoMet), the propylamine donor required for the synthesis of the polyamines spermine and spermidine from the diamine putrescine. The polypeptide is S-adenosylmethionine decarboxylase proenzyme (Parasynechococcus marenigrum (strain WH8102)).